The following is a 259-amino-acid chain: Early E4 30 kDa protein (259 aa).

Belongs to the adenoviridae E4 30 to 34 kDa protein family. In terms of assembly, interacts with E1B-55k.

It is found in the host nucleus. It localises to the host cytoplasm. Plays a major role to prevent cellular inhibition of viral genome replication by nuclear bodies. Assembles an SCF-like E3 ubiquitin ligase complex based on the cellular proteins ELOB, ELOC, CUL5 and RBX1, in cooperation with viral E1B-55K. This viral RING-type ligase ubiquitinates cellular substrates prior to proteasomal degradation: p53/TP53, LIG4, MRE11-RAD50-NBS1 (MRN) complex, ITGA3, DAXX and BLM. The polypeptide is Early E4 30 kDa protein (Canine adenovirus serotype 2 (strain Toronto A 26-61) (CAdV-2)).